The following is a 143-amino-acid chain: MDITEIMNLIPHRYPFLLVDRVLEIDLNKSILGIKNVTVNEPQFTGHFPARPVMPGVLMVEAMAQLAAILVAKSLGSTKNKEVFLMTIENSKFRRIVQPGDTMHIHTVIDQQRANVWKFSSTVKIEGEITAESKFTAMIKDKA.

His47 is an active-site residue.

This sequence belongs to the thioester dehydratase family. FabZ subfamily.

The protein localises to the cytoplasm. The enzyme catalyses a (3R)-hydroxyacyl-[ACP] = a (2E)-enoyl-[ACP] + H2O. Functionally, involved in unsaturated fatty acids biosynthesis. Catalyzes the dehydration of short chain beta-hydroxyacyl-ACPs and long chain saturated and unsaturated beta-hydroxyacyl-ACPs. The sequence is that of 3-hydroxyacyl-[acyl-carrier-protein] dehydratase FabZ from Rickettsia canadensis (strain McKiel).